Here is a 607-residue protein sequence, read N- to C-terminus: uncharacterized protein (607 aa).

A DNA-binding region (zn(2)-C6 fungal-type) is located at residues 16 to 44; the sequence is CTVCRKRKLKCDGNKPCGRCIRLNTPKEC.

It localises to the nucleus. This is an uncharacterized protein from Saccharomyces cerevisiae (strain ATCC 204508 / S288c) (Baker's yeast).